Here is a 348-residue protein sequence, read N- to C-terminus: Dihydroorotase (348 aa).

2 residues coordinate Zn(2+): His-14 and His-16. Residues 16 to 18 (HLR) and Asn-42 contribute to the substrate site. Zn(2+) contacts are provided by Lys-100, His-137, and His-175. Lys-100 bears the N6-carboxylysine mark. His-137 lines the substrate pocket. Leu-220 is a binding site for substrate. Residue Asp-248 coordinates Zn(2+). Asp-248 is a catalytic residue. Residues His-252 and Ala-264 each contribute to the substrate site.

This sequence belongs to the metallo-dependent hydrolases superfamily. DHOase family. Class II DHOase subfamily. Homodimer. It depends on Zn(2+) as a cofactor.

The enzyme catalyses (S)-dihydroorotate + H2O = N-carbamoyl-L-aspartate + H(+). Its pathway is pyrimidine metabolism; UMP biosynthesis via de novo pathway; (S)-dihydroorotate from bicarbonate: step 3/3. Catalyzes the reversible cyclization of carbamoyl aspartate to dihydroorotate. The protein is Dihydroorotase of Pseudomonas aeruginosa (strain UCBPP-PA14).